A 131-amino-acid polypeptide reads, in one-letter code: Profilin-2 (131 aa).

The protein belongs to the profilin family. In terms of assembly, occurs in many kinds of cells as a complex with monomeric actin in a 1:1 ratio. As to expression, expressed in the intestinal wall, the spermatheca, and the pharynx.

It localises to the cytoplasm. It is found in the cytoskeleton. Functionally, binds to actin and affects the structure of the cytoskeleton. At high concentrations, profilin prevents the polymerization of actin, whereas it enhances it at low concentrations. By binding to PIP2, it inhibits the formation of IP3 and DG. This is Profilin-2 (pfn-2) from Caenorhabditis elegans.